A 301-amino-acid chain; its full sequence is tRNA dimethylallyltransferase (301 aa).

An ATP-binding site is contributed by 9–16 (GPTASGKS). 11–16 (TASGKS) contributes to the substrate binding site. An interaction with substrate tRNA region spans residues 34 to 37 (DSMQ).

This sequence belongs to the IPP transferase family. As to quaternary structure, monomer. Mg(2+) serves as cofactor.

It catalyses the reaction adenosine(37) in tRNA + dimethylallyl diphosphate = N(6)-dimethylallyladenosine(37) in tRNA + diphosphate. Functionally, catalyzes the transfer of a dimethylallyl group onto the adenine at position 37 in tRNAs that read codons beginning with uridine, leading to the formation of N6-(dimethylallyl)adenosine (i(6)A). The chain is tRNA dimethylallyltransferase from Corynebacterium efficiens (strain DSM 44549 / YS-314 / AJ 12310 / JCM 11189 / NBRC 100395).